Here is a 139-residue protein sequence, read N- to C-terminus: Maximins 4/H3 type 6 (139 aa).

Positions 1 to 18 (MNFKYIVAVSFLIASAYA) are cleaved as a signal peptide. Residues 19 to 43 (RSVQNDEQSLSQRDVLEEESLREIR) constitute a propeptide that is removed on maturation. Position 70 is an asparagine amide (Asn70). A propeptide spanning residues 74–118 (TAEDHEVMKRLEAVMRDLDSLDHPEEASERETRGFNQDEIAKEKR) is cleaved from the precursor. Ile138 bears the Isoleucine amide mark.

This sequence belongs to the bombinin family. As to expression, expressed by the skin glands.

The protein localises to the secreted. Maximin-4 shows antibacterial activity against both Gram-positive and Gram-negative bacteria. It also shows antimicrobial activity against the fungus C.albicans, but not against A.flavus nor P.uticale. It has little hemolytic activity. It does not possess a significant cytotoxicity against tumor cell lines. It does not possess a significant anti-HIV activity. In terms of biological role, maximin-H3 shows antibacterial activity against both Gram-positive and Gram-negative bacteria. It also shows antimicrobial activity against the fungus C.albicans. Shows strong hemolytic activity. The polypeptide is Maximins 4/H3 type 6 (Bombina maxima (Giant fire-bellied toad)).